Here is a 565-residue protein sequence, read N- to C-terminus: Thiol:disulfide interchange protein DsbD (565 aa).

Positions 1–19 (MAQRIFTLILLLCSTSVFA) are cleaved as a signal peptide. 2 disulfide bridges follow: Cys122-Cys128 and Cys182-Cys304. A run of 7 helical transmembrane segments spans residues 163–183 (LPFS…TPCV), 208–228 (LLTF…GLVV), 243–263 (YVLI…FGLF), 296–316 (IAGL…LLYI), 323–343 (WLGG…LMLI), 357–377 (WMEQ…VFLL), and 384–404 (VWGL…AFIT). In terms of domain architecture, Thioredoxin spans 434 to 565 (WAFGATHTAQ…FSAHLRDRQP (132 aa)). Cys480 and Cys483 are disulfide-bonded.

It belongs to the thioredoxin family. DsbD subfamily.

It localises to the cell inner membrane. The catalysed reaction is [protein]-dithiol + NAD(+) = [protein]-disulfide + NADH + H(+). It catalyses the reaction [protein]-dithiol + NADP(+) = [protein]-disulfide + NADPH + H(+). Its function is as follows. Required to facilitate the formation of correct disulfide bonds in some periplasmic proteins and for the assembly of the periplasmic c-type cytochromes. Acts by transferring electrons from cytoplasmic thioredoxin to the periplasm. This transfer involves a cascade of disulfide bond formation and reduction steps. The chain is Thiol:disulfide interchange protein DsbD from Shigella boydii serotype 4 (strain Sb227).